The following is a 1302-amino-acid chain: RNA-directed RNA polymerase (1302 aa).

The RdRp catalytic domain maps to Val-562 to Val-823.

It belongs to the reoviridae RNA-directed RNA polymerase family.

The enzyme catalyses RNA(n) + a ribonucleoside 5'-triphosphate = RNA(n+1) + diphosphate. The sequence is that of RNA-directed RNA polymerase (Segment-1) from Antilocapra americana (Pronghorn).